Here is a 310-residue protein sequence, read N- to C-terminus: N-acetyl-gamma-glutamyl-phosphate reductase (310 aa).

The active site involves Cys-117.

The protein belongs to the NAGSA dehydrogenase family. Type 2 subfamily.

It localises to the cytoplasm. It catalyses the reaction N-acetyl-L-glutamate 5-semialdehyde + phosphate + NADP(+) = N-acetyl-L-glutamyl 5-phosphate + NADPH + H(+). The protein operates within amino-acid biosynthesis; L-arginine biosynthesis; N(2)-acetyl-L-ornithine from L-glutamate: step 3/4. Its function is as follows. Catalyzes the NADPH-dependent reduction of N-acetyl-5-glutamyl phosphate to yield N-acetyl-L-glutamate 5-semialdehyde. The polypeptide is N-acetyl-gamma-glutamyl-phosphate reductase (Rhizobium etli (strain CIAT 652)).